The following is a 141-amino-acid chain: Nucleoside diphosphate kinase (141 aa).

ATP-binding residues include lysine 11, phenylalanine 59, arginine 87, threonine 93, arginine 104, and asparagine 114. Histidine 117 functions as the Pros-phosphohistidine intermediate in the catalytic mechanism.

The protein belongs to the NDK family. Homotetramer. The cofactor is Mg(2+).

Its subcellular location is the cytoplasm. It catalyses the reaction a 2'-deoxyribonucleoside 5'-diphosphate + ATP = a 2'-deoxyribonucleoside 5'-triphosphate + ADP. The catalysed reaction is a ribonucleoside 5'-diphosphate + ATP = a ribonucleoside 5'-triphosphate + ADP. In terms of biological role, major role in the synthesis of nucleoside triphosphates other than ATP. The ATP gamma phosphate is transferred to the NDP beta phosphate via a ping-pong mechanism, using a phosphorylated active-site intermediate. The chain is Nucleoside diphosphate kinase from Stenotrophomonas maltophilia (strain R551-3).